Here is a 375-residue protein sequence, read N- to C-terminus: Chaperone protein DnaJ (375 aa).

The J domain maps to 5 to 70; that stretch reads DYYEVLGVER…SKRAAFDQYG (66 aa). Residues 134-212 form a CR-type zinc finger; the sequence is GTTVSIRVPT…CHGEGRVEEY (79 aa). Residues cysteine 147, cysteine 150, cysteine 164, cysteine 167, cysteine 186, cysteine 189, cysteine 200, and cysteine 203 each coordinate Zn(2+). CXXCXGXG motif repeat units follow at residues 147–154, 164–171, 186–193, and 200–207; these read CQPCDGSG, CPTCGGIG, CPRCHGQG, and CTSCHGEG.

The protein belongs to the DnaJ family. As to quaternary structure, homodimer. The cofactor is Zn(2+).

It localises to the cytoplasm. Functionally, participates actively in the response to hyperosmotic and heat shock by preventing the aggregation of stress-denatured proteins and by disaggregating proteins, also in an autonomous, DnaK-independent fashion. Unfolded proteins bind initially to DnaJ; upon interaction with the DnaJ-bound protein, DnaK hydrolyzes its bound ATP, resulting in the formation of a stable complex. GrpE releases ADP from DnaK; ATP binding to DnaK triggers the release of the substrate protein, thus completing the reaction cycle. Several rounds of ATP-dependent interactions between DnaJ, DnaK and GrpE are required for fully efficient folding. Also involved, together with DnaK and GrpE, in the DNA replication of plasmids through activation of initiation proteins. This Pseudomonas putida (strain ATCC 47054 / DSM 6125 / CFBP 8728 / NCIMB 11950 / KT2440) protein is Chaperone protein DnaJ.